The chain runs to 377 residues: Succinyl-diaminopimelate desuccinylase (377 aa).

H67 is a binding site for Zn(2+). D69 is an active-site residue. D100 serves as a coordination point for Zn(2+). Catalysis depends on E134, which acts as the Proton acceptor. E135, E163, and H349 together coordinate Zn(2+).

This sequence belongs to the peptidase M20A family. DapE subfamily. As to quaternary structure, homodimer. It depends on Zn(2+) as a cofactor. Co(2+) serves as cofactor.

The catalysed reaction is N-succinyl-(2S,6S)-2,6-diaminopimelate + H2O = (2S,6S)-2,6-diaminopimelate + succinate. Its pathway is amino-acid biosynthesis; L-lysine biosynthesis via DAP pathway; LL-2,6-diaminopimelate from (S)-tetrahydrodipicolinate (succinylase route): step 3/3. Its function is as follows. Catalyzes the hydrolysis of N-succinyl-L,L-diaminopimelic acid (SDAP), forming succinate and LL-2,6-diaminopimelate (DAP), an intermediate involved in the bacterial biosynthesis of lysine and meso-diaminopimelic acid, an essential component of bacterial cell walls. The protein is Succinyl-diaminopimelate desuccinylase of Mannheimia succiniciproducens (strain KCTC 0769BP / MBEL55E).